Here is a 362-residue protein sequence, read N- to C-terminus: Probable choline-phosphate cytidylyltransferase (362 aa).

Positions 1 to 37 (MGEEGIKINDTHKRRIDEVEPSEKEDNVERQTKKYNF) are enriched in basic and acidic residues. The segment at 1–79 (MGEEGIKIND…VSPVEEEPRD (79 aa)) is disordered. Residues 109-117 (VFDLFHIGH) and Lys147 contribute to the CTP site. Substrate contacts are provided by Lys147 and Trp176. CTP is bound by residues 193–194 (HD), Tyr198, and 221–225 (RTEGV). The interval 308–362 (KNPLHGSSEPSSPGPTGFLGGINRWMQRRSSSHYDLPRVGNEIAASSSSATEENH) is disordered. Composition is skewed to low complexity over residues 313 to 323 (GSSEPSSPGPT) and 351 to 362 (AASSSSATEENH). 2 positions are modified to phosphoserine: Ser315 and Ser319. Thr323 carries the post-translational modification Phosphothreonine. Residue Ser355 is modified to Phosphoserine.

It belongs to the cytidylyltransferase family.

The protein localises to the nucleus. It carries out the reaction phosphocholine + CTP + H(+) = CDP-choline + diphosphate. This Schizosaccharomyces pombe (strain 972 / ATCC 24843) (Fission yeast) protein is Probable choline-phosphate cytidylyltransferase.